We begin with the raw amino-acid sequence, 101 residues long: MAQTSAVEKNKRREKLVKRHAVKRARLKAIVMDQGLPLEERFRATIRLAELPRNSAKVRIRNRCEVSGRPRGYYRKLKMSRIALRQLGSLGQIPGVVKSSW.

It belongs to the universal ribosomal protein uS14 family. As to quaternary structure, part of the 30S ribosomal subunit. Contacts proteins S3 and S10.

Binds 16S rRNA, required for the assembly of 30S particles and may also be responsible for determining the conformation of the 16S rRNA at the A site. This is Small ribosomal subunit protein uS14 from Brucella abortus (strain 2308).